Consider the following 318-residue polypeptide: CMRF35-like molecule 8 (318 aa).

Positions 1 to 27 are cleaved as a signal peptide; it reads MTQLASAVWLPTLLLLLLLFWLPGCVP. The Ig-like V-type domain maps to 28-129; sequence LHGPSTMSGS…FDGSLGFDKY (102 aa). Topologically, residues 28-185 are extracellular; sequence LHGPSTMSGS…HDYSQGLRLP (158 aa). A disulfide bridge connects residues Cys-46 and Cys-113. The N-linked (GlcNAc...) asparagine glycan is linked to Asn-93. A compositionally biased stretch (low complexity) spans 139–148; the sequence is SEDPVSSPGP. Residues 139-174 are disordered; the sequence is SEDPVSSPGPTLETPVVSTSLPTKGPALGSNTEGHR. A helical transmembrane segment spans residues 186–206; it reads ALLSVLALLLFLLVGTSLLAW. The Cytoplasmic segment spans residues 207-318; that stretch reads RMFQKRLVKA…PRKGLSDLYL (112 aa). A compositionally biased stretch (polar residues) spans 284–296; sequence QDSHANGDSLHQP. The interval 284–318 is disordered; sequence QDSHANGDSLHQPQDQKAEYSEIQKPRKGLSDLYL. Over residues 297-308 the composition is skewed to basic and acidic residues; it reads QDQKAEYSEIQK. Tyr-303 is subject to Phosphotyrosine.

Belongs to the CD300 family. In terms of assembly, upon tyrosine-phosphorylation, interacts with PTN6/SHP-1 and PTPN11/SHP-2 and INPP5D. In terms of processing, phosphorylated on tyrosine. Post-translationally, N-glycosylated. As to expression, present on the surface of the majority of myeloid cells and a subset of B-cells. Present on the surface of NK cells after IL-12 stimulation.

The protein resides in the cell membrane. Its function is as follows. Inhibitory receptor which may contribute to the down-regulation of cytolytic activity in natural killer (NK) cells, and to the down-regulation of mast cell degranulation. Negatively regulates the Toll-like receptor (TLR) signaling mediated by MYD88 but not TRIF through activation of PTPN6. The sequence is that of CMRF35-like molecule 8 (Cd300a) from Mus musculus (Mouse).